Reading from the N-terminus, the 324-residue chain is Acetyl-coenzyme A carboxylase carboxyl transferase subunit alpha (324 aa).

A CoA carboxyltransferase C-terminal domain is found at 37–291 (KLEKRLDKLK…REFIIQEWLR (255 aa)).

It belongs to the AccA family. In terms of assembly, acetyl-CoA carboxylase is a heterohexamer composed of biotin carboxyl carrier protein (AccB), biotin carboxylase (AccC) and two subunits each of ACCase subunit alpha (AccA) and ACCase subunit beta (AccD).

Its subcellular location is the cytoplasm. It catalyses the reaction N(6)-carboxybiotinyl-L-lysyl-[protein] + acetyl-CoA = N(6)-biotinyl-L-lysyl-[protein] + malonyl-CoA. It participates in lipid metabolism; malonyl-CoA biosynthesis; malonyl-CoA from acetyl-CoA: step 1/1. In terms of biological role, component of the acetyl coenzyme A carboxylase (ACC) complex. First, biotin carboxylase catalyzes the carboxylation of biotin on its carrier protein (BCCP) and then the CO(2) group is transferred by the carboxyltransferase to acetyl-CoA to form malonyl-CoA. In Chlamydia pneumoniae (Chlamydophila pneumoniae), this protein is Acetyl-coenzyme A carboxylase carboxyl transferase subunit alpha.